The primary structure comprises 232 residues: Large ribosomal subunit protein uL1 (232 aa).

The protein belongs to the universal ribosomal protein uL1 family. Part of the 50S ribosomal subunit.

Its function is as follows. Binds directly to 23S rRNA. The L1 stalk is quite mobile in the ribosome, and is involved in E site tRNA release. Functionally, protein L1 is also a translational repressor protein, it controls the translation of the L11 operon by binding to its mRNA. The polypeptide is Large ribosomal subunit protein uL1 (Bacillus pumilus (strain SAFR-032)).